The primary structure comprises 171 residues: AN1-type zinc finger protein 2A (171 aa).

2 consecutive AN1-type zinc fingers follow at residues 4 to 52 (PDLG…KKDV) and 94 to 142 (KVFT…SSVS). Zn(2+) contacts are provided by Cys10, Cys15, Cys25, Cys28, Cys33, His36, His42, Cys44, Cys100, Cys105, Cys115, Cys118, Cys123, His126, His132, and Cys134. The segment at 135-171 (QAGSSSVSRGRSSASRAAEQKPSGVSWLAQRLRRTVK) is disordered. A compositionally biased stretch (low complexity) spans 136 to 151 (AGSSSVSRGRSSASRA).

The protein resides in the cytoplasm. Its subcellular location is the nucleus. The sequence is that of AN1-type zinc finger protein 2A (Zfand2a) from Rattus norvegicus (Rat).